Here is a 221-residue protein sequence, read N- to C-terminus: Translation initiation factor 6 (221 aa).

Belongs to the eIF-6 family.

Binds to the 50S ribosomal subunit and prevents its association with the 30S ribosomal subunit to form the 70S initiation complex. This chain is Translation initiation factor 6, found in Methanospirillum hungatei JF-1 (strain ATCC 27890 / DSM 864 / NBRC 100397 / JF-1).